A 213-amino-acid chain; its full sequence is Thymidylate kinase (213 aa).

An ATP-binding site is contributed by 9 to 16; that stretch reads GLEGAGKS.

The protein belongs to the thymidylate kinase family.

The catalysed reaction is dTMP + ATP = dTDP + ADP. Functionally, phosphorylation of dTMP to form dTDP in both de novo and salvage pathways of dTTP synthesis. This Aeromonas hydrophila subsp. hydrophila (strain ATCC 7966 / DSM 30187 / BCRC 13018 / CCUG 14551 / JCM 1027 / KCTC 2358 / NCIMB 9240 / NCTC 8049) protein is Thymidylate kinase.